We begin with the raw amino-acid sequence, 525 residues long: Nucleolar and spindle-associated protein 1-A (525 aa).

4 disordered regions span residues 46–205, 248–292, 373–397, and 451–525; these read ESKD…LHEA, EKTP…RFSA, TPESEPKQMLPSVKKNEPMATPEKA, and SLSR…VPVQ. A compositionally biased stretch (polar residues) spans 58 to 69; that stretch reads SSLTDTDELNSS. The segment covering 82 to 92 has biased composition (basic residues); the sequence is THRRGRGRKPL. Residues 106–127 are compositionally biased toward polar residues; the sequence is SVGTGTESLASETDNTQDQNCL. Residues 160–169 show a composition bias toward basic and acidic residues; sequence TTEKRQKKAS. The segment covering 270–285 has biased composition (polar residues); sequence PPTTGASPSRTPTNQR. Over residues 476-494 the composition is skewed to polar residues; it reads CGSNNNVSVLKNNFKQPHL. The segment covering 495–514 has biased composition (basic and acidic residues); the sequence is QTREDRRKQHEQDRKGKRDQ.

The protein belongs to the NUSAP family. As to quaternary structure, interacts with DNA. Interacts with microtubules, ipo7, kpna2 and kpnb1. Microtubule stabilization is inhibited by ipo7 and kpna2, while microtubule bundling is inhibited by kpnb1. Active GTP-bound ran causes dissociation of ipo7 and kpnb1.

Its subcellular location is the cytoplasm. The protein localises to the nucleus. The protein resides in the cytoskeleton. It is found in the spindle. Microtubule-associated protein with the capacity to bundle and stabilize microtubules. May associate with chromosomes and promote the organization of meiotic or mitotic spindle microtubules around them. This chain is Nucleolar and spindle-associated protein 1-A (nusap1-a), found in Xenopus laevis (African clawed frog).